Here is a 193-residue protein sequence, read N- to C-terminus: Ion-translocating oxidoreductase complex subunit A (193 aa).

6 helical membrane-spanning segments follow: residues Ile-5–Leu-25, Ile-39–Val-59, Ile-65–Val-85, Leu-102–Leu-122, Val-134–Leu-154, and Ser-171–Val-191.

It belongs to the NqrDE/RnfAE family. As to quaternary structure, the complex is composed of six subunits: RnfA, RnfB, RnfC, RnfD, RnfE and RnfG.

It is found in the cell inner membrane. Functionally, part of a membrane-bound complex that couples electron transfer with translocation of ions across the membrane. In Glaesserella parasuis serovar 5 (strain SH0165) (Haemophilus parasuis), this protein is Ion-translocating oxidoreductase complex subunit A.